The chain runs to 131 residues: S-adenosylmethionine decarboxylase proenzyme (131 aa).

The Schiff-base intermediate with substrate; via pyruvic acid role is filled by Ser64. At Ser64 the chain carries Pyruvic acid (Ser); by autocatalysis. Catalysis depends on His69, which acts as the Proton acceptor; for processing activity. Catalysis depends on Cys84, which acts as the Proton donor; for catalytic activity.

The protein belongs to the prokaryotic AdoMetDC family. Type 1 subfamily. Heterotetramer of two alpha and two beta chains arranged as a dimer of alpha/beta heterodimers. Pyruvate serves as cofactor. Is synthesized initially as an inactive proenzyme. Formation of the active enzyme involves a self-maturation process in which the active site pyruvoyl group is generated from an internal serine residue via an autocatalytic post-translational modification. Two non-identical subunits are generated from the proenzyme in this reaction, and the pyruvate is formed at the N-terminus of the alpha chain, which is derived from the carboxyl end of the proenzyme. The post-translation cleavage follows an unusual pathway, termed non-hydrolytic serinolysis, in which the side chain hydroxyl group of the serine supplies its oxygen atom to form the C-terminus of the beta chain, while the remainder of the serine residue undergoes an oxidative deamination to produce ammonia and the pyruvoyl group blocking the N-terminus of the alpha chain.

The enzyme catalyses S-adenosyl-L-methionine + H(+) = S-adenosyl 3-(methylsulfanyl)propylamine + CO2. It functions in the pathway amine and polyamine biosynthesis; S-adenosylmethioninamine biosynthesis; S-adenosylmethioninamine from S-adenosyl-L-methionine: step 1/1. Its function is as follows. Catalyzes the decarboxylation of S-adenosylmethionine to S-adenosylmethioninamine (dcAdoMet), the propylamine donor required for the synthesis of the polyamines spermine and spermidine from the diamine putrescine. This Thermoplasma acidophilum (strain ATCC 25905 / DSM 1728 / JCM 9062 / NBRC 15155 / AMRC-C165) protein is S-adenosylmethionine decarboxylase proenzyme.